A 232-amino-acid polypeptide reads, in one-letter code: Large ribosomal subunit protein uL1 (232 aa).

The protein belongs to the universal ribosomal protein uL1 family. Part of the 50S ribosomal subunit.

In terms of biological role, binds directly to 23S rRNA. The L1 stalk is quite mobile in the ribosome, and is involved in E site tRNA release. Functionally, protein L1 is also a translational repressor protein, it controls the translation of the L11 operon by binding to its mRNA. In Burkholderia cenocepacia (strain HI2424), this protein is Large ribosomal subunit protein uL1.